A 428-amino-acid chain; its full sequence is MSSVVVVGTQWGDEGKGKITDFLSENAEVIARYQGGNNAGHTIVFNGEKYKLHLIPSGIFYKDKICVIGNGMVVDPKALVAELSYLHERGISTDNLRISNRAHVILPYHLKLDELEEERKGANKIGTTKKGIGPAYMDKAARIGIRIVDLLDRDVFAEKLERNLREKNTLLEKVYGVEGFRLEDIFEEYYEYGQHIAKYVCDTSVVLNNALDEGRRVLFEGAQGVMLDIDQGTYPFVTSSNPVAGGVTIGAGVGPTKIKHVVGVAKAYTTRVGDGPFPTELHDEIGDRIREVGREYGTTTGRPRRVGWFDSVVVRHARRVSGITDLSLNSIDVLTGIETLKICVAYRYRGQVLEEFPASLKVLAECEPIYEELPGWTEDITGVKSLDELPANARHYVERISQLTGIPLSIFSVGPDRSQTNVVRSVYA.

GTP contacts are provided by residues 12-18 and 40-42; these read GDEGKGK and GHT. The Proton acceptor role is filled by D13. Residues D13 and G40 each coordinate Mg(2+). Residues 13–16, 38–41, T128, R142, Q223, T238, and R302 each bind IMP; these read DEGK and NAGH. The active-site Proton donor is the H41. 298-304 contributes to the substrate binding site; the sequence is TTTGRPR. Residues R304, 330-332, and 412-414 each bind GTP; these read SID and SVG.

Belongs to the adenylosuccinate synthetase family. As to quaternary structure, homodimer. It depends on Mg(2+) as a cofactor.

Its subcellular location is the cytoplasm. The enzyme catalyses IMP + L-aspartate + GTP = N(6)-(1,2-dicarboxyethyl)-AMP + GDP + phosphate + 2 H(+). It participates in purine metabolism; AMP biosynthesis via de novo pathway; AMP from IMP: step 1/2. Functionally, plays an important role in the de novo pathway of purine nucleotide biosynthesis. Catalyzes the first committed step in the biosynthesis of AMP from IMP. This Geobacillus kaustophilus (strain HTA426) protein is Adenylosuccinate synthetase.